Here is a 714-residue protein sequence, read N- to C-terminus: Polyribonucleotide nucleotidyltransferase (714 aa).

Residues Asp490 and Asp496 each contribute to the Mg(2+) site. The KH domain occupies 556-615 (PRIETMQIPTDKIREVIGSGGKVIREIVEVSGAKVDINDDGIIKIASPNGDSIKKAYDMI). An S1 motif domain is found at 625–693 (GQVYTGKVVK…DRGKVRLSMK (69 aa)).

The protein belongs to the polyribonucleotide nucleotidyltransferase family. It depends on Mg(2+) as a cofactor.

Its subcellular location is the cytoplasm. It catalyses the reaction RNA(n+1) + phosphate = RNA(n) + a ribonucleoside 5'-diphosphate. Involved in mRNA degradation. Catalyzes the phosphorolysis of single-stranded polyribonucleotides processively in the 3'- to 5'-direction. The polypeptide is Polyribonucleotide nucleotidyltransferase (Ruegeria pomeroyi (strain ATCC 700808 / DSM 15171 / DSS-3) (Silicibacter pomeroyi)).